The chain runs to 118 residues: Large ribosomal subunit protein bL20 (118 aa).

Belongs to the bacterial ribosomal protein bL20 family.

Its function is as follows. Binds directly to 23S ribosomal RNA and is necessary for the in vitro assembly process of the 50S ribosomal subunit. It is not involved in the protein synthesizing functions of that subunit. This is Large ribosomal subunit protein bL20 from Bacillus mycoides (strain KBAB4) (Bacillus weihenstephanensis).